Reading from the N-terminus, the 959-residue chain is Probable transport protein MmpL4 (959 aa).

The next 11 helical transmembrane spans lie at 25–45 (FAVP…VFIP), 205–225 (VIVI…VILL), 239–259 (VVAL…VNLL), 300–320 (FHVI…LSFA), 333–353 (AVGM…VLTV), 381–401 (WPLP…LALP), 766–786 (WDLV…MLII), 790–810 (FVAA…SFGL), 818–838 (ILGI…LLAV), 872–892 (VVTN…VSDL), and 902–922 (IGLG…PSIA).

It belongs to the resistance-nodulation-cell division (RND) (TC 2.A.6) family. MmpL subfamily.

The protein localises to the cell membrane. This chain is Probable transport protein MmpL4 (mmpL4), found in Mycobacterium leprae (strain TN).